Consider the following 280-residue polypeptide: Mesaconyl-C(4)-CoA hydratase (280 aa).

It belongs to the HTD2 family. In terms of assembly, homodimer.

It carries out the reaction (3S)-citramalyl-CoA = 3-methylfumaryl-CoA + H2O. Inhibited by 3-methylfumaryl-CoA concentrations above 0.3 mM. In terms of biological role, involved in the glyoxylate assimilation cycle used to regenerate acetyl-CoA and produce pyruvate as universal precursor for biosynthesis. Catalyzes the hydration of 3-methylfumaryl-CoA (mesaconyl-C4-CoA) to (3S)-citramalyl-CoA. In Chloroflexus aurantiacus (strain ATCC 29366 / DSM 635 / J-10-fl), this protein is Mesaconyl-C(4)-CoA hydratase (meh).